A 686-amino-acid chain; its full sequence is Chondroitin proteoglycan 1 (686 aa).

The N-terminal stretch at 1–18 (MLPKSVLIVAFLVASSSA) is a signal peptide. Residue asparagine 46 is glycosylated (N-linked (GlcNAc...) asparagine). Residues 63 to 120 (DTDCSTKEDGLYAIGGCSPQFLTCSGGIARIMDCPANLIYDQRIIACEYSYNVPECSG) form the Chitin-binding type-2 1 domain. Cysteine 96 and cysteine 109 are joined by a disulfide. Residue asparagine 143 is glycosylated (N-linked (GlcNAc...) asparagine). Positions 228–285 (DKTCNGKADGFYSFGQCSDHYIACSNGYTIPMQCPARLSFDEARVICDYTMNVPECQN) constitute a Chitin-binding type-2 2 domain. A disulfide bridge links cysteine 261 with cysteine 274. Residues 284-312 (QNGSGNYEGSAEETTTEASGELPYSNGYG) form a disordered region. N-linked (GlcNAc...) asparagine glycans are attached at residues asparagine 285, asparagine 635, and asparagine 664. The tract at residues 658-686 (KLRSATNRTSTKEATTRTQNMHAHYHRNH) is disordered.

In terms of biological role, required for polar body extrusion during cytokinesis in embryo development. Affects cortical granule size. Shown to have roles in meiotic chromosome segregation, osmotic barrier function and polarization in conjunction with cpg-2. Binds chitin. This Caenorhabditis briggsae protein is Chondroitin proteoglycan 1 (cpg-1).